Consider the following 318-residue polypeptide: Transaldolase (318 aa).

Lys132 serves as the catalytic Schiff-base intermediate with substrate.

It belongs to the transaldolase family. Type 1 subfamily. As to quaternary structure, homodimer.

The protein localises to the cytoplasm. The enzyme catalyses D-sedoheptulose 7-phosphate + D-glyceraldehyde 3-phosphate = D-erythrose 4-phosphate + beta-D-fructose 6-phosphate. Its pathway is carbohydrate degradation; pentose phosphate pathway; D-glyceraldehyde 3-phosphate and beta-D-fructose 6-phosphate from D-ribose 5-phosphate and D-xylulose 5-phosphate (non-oxidative stage): step 2/3. In terms of biological role, transaldolase is important for the balance of metabolites in the pentose-phosphate pathway. The protein is Transaldolase of Shewanella sp. (strain ANA-3).